Consider the following 631-residue polypeptide: Phosphomethylpyrimidine synthase (631 aa).

Residues N239, M268, Y297, H333, 353–355, 394–397, and E433 contribute to the substrate site; these read SRG and DGLR. Zn(2+) is bound at residue H437. Y460 provides a ligand contact to substrate. H501 provides a ligand contact to Zn(2+). 3 residues coordinate [4Fe-4S] cluster: C581, C584, and C589.

It belongs to the ThiC family. Homodimer. [4Fe-4S] cluster serves as cofactor.

The enzyme catalyses 5-amino-1-(5-phospho-beta-D-ribosyl)imidazole + S-adenosyl-L-methionine = 4-amino-2-methyl-5-(phosphooxymethyl)pyrimidine + CO + 5'-deoxyadenosine + formate + L-methionine + 3 H(+). It functions in the pathway cofactor biosynthesis; thiamine diphosphate biosynthesis. Functionally, catalyzes the synthesis of the hydroxymethylpyrimidine phosphate (HMP-P) moiety of thiamine from aminoimidazole ribotide (AIR) in a radical S-adenosyl-L-methionine (SAM)-dependent reaction. This is Phosphomethylpyrimidine synthase from Escherichia coli (strain 55989 / EAEC).